The sequence spans 460 residues: Pentatricopeptide repeat-containing protein At5g43790 (460 aa).

9 PPR repeats span residues 70–107, 111–142, 149–179, 180–214, 215–249, 250–280, 281–315, 316–351, and 352–382; these read SVFL…RSNF, NEFT…VLKF, DRFV…IREP, DLAT…QVRP, NELS…NLTL, NQFV…MSQR, DVSC…GLVP, DSAT…GIEP, and KVEH…MPVK. Residues 387–460 form a type E motif; degenerate region; that stretch reads LWRSFLGSSQ…NKSPGISTLN (74 aa).

This sequence belongs to the PPR family. PCMP-E subfamily.

This chain is Pentatricopeptide repeat-containing protein At5g43790 (PCMP-E30), found in Arabidopsis thaliana (Mouse-ear cress).